A 128-amino-acid polypeptide reads, in one-letter code: uncharacterized protein (128 aa).

This is an uncharacterized protein from Methanocaldococcus jannaschii (strain ATCC 43067 / DSM 2661 / JAL-1 / JCM 10045 / NBRC 100440) (Methanococcus jannaschii).